Consider the following 247-residue polypeptide: 1-(5-phosphoribosyl)-5-[(5-phosphoribosylamino)methylideneamino] imidazole-4-carboxamide isomerase (247 aa).

The active-site Proton acceptor is the D16. D135 functions as the Proton donor in the catalytic mechanism.

Belongs to the HisA/HisF family.

Its subcellular location is the cytoplasm. It carries out the reaction 1-(5-phospho-beta-D-ribosyl)-5-[(5-phospho-beta-D-ribosylamino)methylideneamino]imidazole-4-carboxamide = 5-[(5-phospho-1-deoxy-D-ribulos-1-ylimino)methylamino]-1-(5-phospho-beta-D-ribosyl)imidazole-4-carboxamide. Its pathway is amino-acid biosynthesis; L-histidine biosynthesis; L-histidine from 5-phospho-alpha-D-ribose 1-diphosphate: step 4/9. This chain is 1-(5-phosphoribosyl)-5-[(5-phosphoribosylamino)methylideneamino] imidazole-4-carboxamide isomerase, found in Paenarthrobacter aurescens (strain TC1).